A 136-amino-acid polypeptide reads, in one-letter code: Thiosulfate sulfurtransferase 18 (136 aa).

A Rhodanese domain is found at Leu-26–Thr-128. Residue Cys-88 is the Cysteine persulfide intermediate of the active site.

It is found in the cytoplasm. It carries out the reaction thiosulfate + hydrogen cyanide = thiocyanate + sulfite + 2 H(+). Catalyzes the transfer of a sulfur ion from a donor to cyanide or to other thiol compounds. Substrate preference is thiosulfate &gt; 3-mercaptopyruvate. This Arabidopsis thaliana (Mouse-ear cress) protein is Thiosulfate sulfurtransferase 18 (STR18).